The primary structure comprises 200 residues: Probable DNA-directed RNA polymerase subunit delta (200 aa).

The 70-residue stretch at 19–88 folds into the HTH HARE-type domain; it reads LSMIEVARAI…GDNKWGLRSW (70 aa). 2 stretches are compositionally biased toward acidic residues: residues 125 to 143 and 150 to 200; these read DSDA…DAYE and YDDE…TSEE. The tract at residues 125–200 is disordered; that stretch reads DSDAIDYNAD…SDDDAETSEE (76 aa).

The protein belongs to the RpoE family. In terms of assembly, RNAP is composed of a core of 2 alpha, a beta and a beta' subunits. The core is associated with a delta subunit and one of several sigma factors.

Participates in both the initiation and recycling phases of transcription. In the presence of the delta subunit, RNAP displays an increased specificity of transcription, a decreased affinity for nucleic acids, and an increased efficiency of RNA synthesis because of enhanced recycling. This Streptococcus pneumoniae serotype 4 (strain ATCC BAA-334 / TIGR4) protein is Probable DNA-directed RNA polymerase subunit delta.